Here is a 399-residue protein sequence, read N- to C-terminus: Elongation factor Tu (399 aa).

In terms of domain architecture, tr-type G spans 10-204 (KPHVNIGTIG…AVDASIPEPE (195 aa)). Positions 19–26 (GHVDHGKT) are G1. 19-26 (GHVDHGKT) contributes to the GTP binding site. Threonine 26 is a Mg(2+) binding site. The tract at residues 60–64 (GITIN) is G2. A G3 region spans residues 81 to 84 (DCPG). GTP is bound by residues 81–85 (DCPGH) and 136–139 (NKCD). The interval 136–139 (NKCD) is G4. Positions 174–176 (SGL) are G5.

This sequence belongs to the TRAFAC class translation factor GTPase superfamily. Classic translation factor GTPase family. EF-Tu/EF-1A subfamily. As to quaternary structure, monomer.

It is found in the cytoplasm. It carries out the reaction GTP + H2O = GDP + phosphate + H(+). Functionally, GTP hydrolase that promotes the GTP-dependent binding of aminoacyl-tRNA to the A-site of ribosomes during protein biosynthesis. This is Elongation factor Tu from Prochlorococcus marinus subsp. pastoris (strain CCMP1986 / NIES-2087 / MED4).